The chain runs to 124 residues: MPTINQLIRKPRKSQKEKTASPALQNCPQKRGICTRVMTVTPKKPNSALRKVARVRLSNGFEVTAYIPGIGHNLQEHSVVLIRGGRVKDLPGVRYHIIRGAKDTLGVNNRKQGRSKYGTKRPKA.

The tract at residues 1-25 (MPTINQLIRKPRKSQKEKTASPALQ) is disordered. Residue Asp89 is modified to 3-methylthioaspartic acid.

The protein belongs to the universal ribosomal protein uS12 family. Part of the 30S ribosomal subunit. Contacts proteins S8 and S17. May interact with IF1 in the 30S initiation complex.

Functionally, with S4 and S5 plays an important role in translational accuracy. Its function is as follows. Interacts with and stabilizes bases of the 16S rRNA that are involved in tRNA selection in the A site and with the mRNA backbone. Located at the interface of the 30S and 50S subunits, it traverses the body of the 30S subunit contacting proteins on the other side and probably holding the rRNA structure together. The combined cluster of proteins S8, S12 and S17 appears to hold together the shoulder and platform of the 30S subunit. The chain is Small ribosomal subunit protein uS12 from Borrelia duttonii (strain Ly).